Here is a 421-residue protein sequence, read N- to C-terminus: Voltage-dependent calcium channel gamma-8 subunit (421 aa).

A run of 4 helical transmembrane segments spans residues 19 to 39 (VQVLLTTIGAFAAFGLMTIAI), 127 to 147 (SSIFPILSAILLLLGGVCVAA), 157 to 177 (IILGAGILFVAAGLSNIIGVI), and 207 to 227 (FGGLSFILAEVIGVLAVNIYI). A phosphoserine mark is found at Ser251 and Ser254. A disordered region spans residues 271–304 (RRSRSSSRGSSEASPSRDASPGGPGGPGFASTDI). Positions 276-287 (SSRGSSEASPSR) are enriched in low complexity. Residues 318–338 (VAAGLASAGGGGGGAGVGAYG) form a helical membrane-spanning segment. 2 disordered regions span residues 342–363 (GAAGGGGTGSERDRGSSAGFLT) and 378–421 (VTVT…TTPV). The segment covering 384-397 (PAAPAPAPPAPAAP) has biased composition (pro residues). Residues 408–421 (ASNTNTLNRKTTPV) show a composition bias toward polar residues.

Belongs to the PMP-22/EMP/MP20 family. CACNG subfamily. In terms of assembly, interacts with CACNA1C. Identified in a complex with the L-type calcium channel subunits CACNA1C, CACNA2D1 and either CACNB1 or CACNB2. Acts as an auxiliary subunit for AMPA-selective glutamate receptors (AMPARs). Found in a complex with GRIA1, GRIA2, GRIA3, GRIA4, CNIH2, CNIH3, CACNG2, CACNG3, CACNG4, CACNG5 and CACNG7. Interacts with CNIH2. Found in a complex with GRIA1, GRIA2, GRIA3, GRIA4, DLG4 and CNIH2. In terms of processing, palmitoylated. Probably palmitoylated by ZDHHC3 and ZDHHC7.

It is found in the cell membrane. The protein resides in the postsynaptic density membrane. Its function is as follows. Regulates the activity of L-type calcium channels that contain CACNA1C as pore-forming subunit. Regulates the trafficking and gating properties of AMPA-selective glutamate receptors (AMPARs). Promotes their targeting to the cell membrane and synapses and modulates their gating properties by slowing their rates of activation, deactivation and desensitization and by mediating their resensitization. Does not show subunit-specific AMPA receptor regulation and regulates all AMPAR subunits. Thought to stabilize the calcium channel in an inactivated (closed) state. The polypeptide is Voltage-dependent calcium channel gamma-8 subunit (Rattus norvegicus (Rat)).